Reading from the N-terminus, the 182-residue chain is UPF0200 protein Mboo_1593 (182 aa).

8–15 (GLPASGKG) is a binding site for ATP.

This sequence belongs to the UPF0200 family.

This chain is UPF0200 protein Mboo_1593, found in Methanoregula boonei (strain DSM 21154 / JCM 14090 / 6A8).